Reading from the N-terminus, the 361-residue chain is G-protein coupled receptor 183 (361 aa).

Residues 1-31 (MDIQMANNFTPPSATPQGNDCDLYAHHSTAR) are Extracellular-facing. A helical membrane pass occupies residues 32–57 (IVMPLHYSLVFIIGLVGNLLALVVIV). Residues 58-77 (QNRKKINSTTLYSTNLVISD) are Cytoplasmic-facing. Residues 78–95 (ILFTTALPTRIAYYAMGF) traverse the membrane as a helical segment. 7alpha,25-dihydroxycholesterol is bound at residue R87. The Extracellular segment spans residues 96 to 105 (DWRIGDALCR). Residues C104 and C181 are joined by a disulfide bond. A helical transmembrane segment spans residues 106 to 127 (ITALVFYINTYAGVNFMTCLSI). 2 residues coordinate 7alpha,25-dihydroxycholesterol: Y112 and Y116. The interaction with G proteins stretch occupies residues 126–134 (SIDRFIAVV). The Cytoplasmic portion of the chain corresponds to 128-149 (DRFIAVVHPLRYNKIKRIEHAK). The helical transmembrane segment at 150-168 (GVCIFVWILVFAQTLPLLI) threads the bilayer. At 169–192 (NPMSKQEAERITCMEYPNFEETKS) the chain is on the extracellular side. The helical transmembrane segment at 193–215 (LPWILLGACFIGYVLPLIIILIC) threads the bilayer. Residues 216–241 (YSQICCKLFRTAKQNPLTEKSGVNKK) are Cytoplasmic-facing. The helical transmembrane segment at 242 to 265 (ALNTIILIIVVFVLCFTPYHVAII) threads the bilayer. Y260 serves as a coordination point for 7alpha,25-dihydroxycholesterol. Residues 266–287 (QHMIKKLRFSNFLECSQRHSFQ) lie on the Extracellular side of the membrane. Residues 288–312 (ISLHFTVCLMNFNCCMDPFIYFFAC) form a helical membrane-spanning segment. Topologically, residues 313–361 (KGYKRKVMRMLKRQVSVSISSAVKSAPEENSREMTETQMMIHSKSSNGK) are cytoplasmic. At S328 the chain carries Phosphoserine. The disordered stretch occupies residues 340-361 (EENSREMTETQMMIHSKSSNGK). Residues 348 to 361 (ETQMMIHSKSSNGK) are compositionally biased toward polar residues.

This sequence belongs to the G-protein coupled receptor 1 family. As to quaternary structure, homodimer and heterodimer. Heterodimerizes with CXCR5; leading to modulate the interaction between of CXCL13 and CXCR5. As to expression, expressed abundantly in lymphoid tissues such as spleen and lymph node, and in B- and T-lymphocytes. Also highly expressed in lung, heart and gastrointestinal tract, and weakly expressed in the urogenital system and brain. Expressed in astrocytes.

The protein resides in the cell membrane. In terms of biological role, G-protein coupled receptor expressed in lymphocytes that acts as a chemotactic receptor for B-cells, T-cells, splenic dendritic cells, monocytes/macrophages and astrocytes. Receptor for oxysterol 7-alpha,25-dihydroxycholesterol (7-alpha,25-OHC) and other related oxysterols. Mediates cell positioning and movement of a number of cells by binding the 7-alpha,25-OHC ligand that forms a chemotactic gradient. Binding of 7-alpha,25-OHC mediates the correct localization of B-cells during humoral immune responses. Guides B-cell movement along the B-cell zone-T-cell zone boundary and later to interfollicular and outer follicular regions. Its specific expression during B-cell maturation helps position B-cells appropriately for mounting T-dependent antibody responses. Collaborates with CXCR5 to mediate B-cell migration; probably by forming a heterodimer with CXCR5 that affects the interaction between of CXCL13 and CXCR5. Also acts as a chemotactic receptor for some T-cells upon binding to 7-alpha,25-OHC ligand. Promotes follicular helper T (Tfh) cells differentiation by positioning activated T-cells at the follicle-T-zone interface, promoting contact of newly activated CD4 T-cells with activated dendritic cells and exposing them to Tfh-cell-promoting inducible costimulator (ICOS) ligand. Expression in splenic dendritic cells is required for their homeostasis, localization and ability to induce B- and T-cell responses: GPR183 acts as a chemotactic receptor in dendritic cells that mediates the accumulation of CD4(+) dendritic cells in bridging channels. Regulates migration of astrocytes and is involved in communication between astrocytes and macrophages. Promotes osteoclast precursor migration to bone surfaces. Signals constitutively through G(i)-alpha, but not G(s)-alpha or G(q)-alpha. Signals constitutively also via MAPK1/3 (ERK1/2). This is G-protein coupled receptor 183 from Homo sapiens (Human).